We begin with the raw amino-acid sequence, 86 residues long: MAFSHTKKVGPTGRFGPRYGLGIRKRVLTVEIKQRKKHVCPFCRSKAVIREAYGIYRCKKCGKQFTGLAYYPYEHLHEYYKIRGGQ.

Zn(2+)-binding residues include C40, C43, C58, and C61. The C4-type zinc-finger motif lies at 40–61 (CPFCRSKAVIREAYGIYRCKKC).

The protein belongs to the eukaryotic ribosomal protein eL43 family. Putative zinc-binding subfamily. In terms of assembly, part of the 50S ribosomal subunit. Zn(2+) is required as a cofactor.

Binds to the 23S rRNA. The sequence is that of Large ribosomal subunit protein eL43 from Nanoarchaeum equitans (strain Kin4-M).